The chain runs to 80 residues: Spermatid-specific protein S2 (80 aa).

The span at 1–36 shows a compositional bias: basic residues; the sequence is VKSRYHQRQYRARKRYAKARRTKKPKRRPKPPRKLR. Residues 1-44 are disordered; the sequence is VKSRYHQRQYRARKRYAKARRTKKPKRRPKPPRKLRYAPSKKQP.

It localises to the nucleus. Its subcellular location is the chromosome. Its function is as follows. Involved in nuclear basic protein transition: histones are replaced by spermatid specific proteins which are themselves replaced by protamines in late spermatids. The protein is Spermatid-specific protein S2 of Scyliorhinus canicula (Small-spotted catshark).